A 279-amino-acid chain; its full sequence is Bifunctional protein FolD (279 aa).

NADP(+) contacts are provided by residues Gly-159 to Ser-161, Ser-184, and Thr-225.

Belongs to the tetrahydrofolate dehydrogenase/cyclohydrolase family. In terms of assembly, homodimer.

The enzyme catalyses (6R)-5,10-methylene-5,6,7,8-tetrahydrofolate + NADP(+) = (6R)-5,10-methenyltetrahydrofolate + NADPH. The catalysed reaction is (6R)-5,10-methenyltetrahydrofolate + H2O = (6R)-10-formyltetrahydrofolate + H(+). It participates in one-carbon metabolism; tetrahydrofolate interconversion. Catalyzes the oxidation of 5,10-methylenetetrahydrofolate to 5,10-methenyltetrahydrofolate and then the hydrolysis of 5,10-methenyltetrahydrofolate to 10-formyltetrahydrofolate. This Methanospirillum hungatei JF-1 (strain ATCC 27890 / DSM 864 / NBRC 100397 / JF-1) protein is Bifunctional protein FolD.